Reading from the N-terminus, the 1068-residue chain is MEMNMFILPDFLQIQIESFRRFLHNCIFEELSKFPIIYDSNQGIEFKLIPEKYLLTEPLFTEREAVYKFTTYSSDLYVPIQLTLTKEKKSRIQTVCLGSLPLMTPQGTFVINGVSWTIVNQILRNPGIYYVLNRNGMYTATILCLDVDKRLRLEIDKKGRLSVRINNRHKIPLVFLLIALGLDINDIPDWLQSRTKKLEDLLSGLKNEGERTLELIALYKQLPGPKKVKPKANPLIISEQIQQWCAQVYKLGTSGRLNLNRRLNLNFSKSNDSLLPQDLIAAAELLVKMSLLHPGPKGGKDSSDDIDHLKNKHVISVAEMLRKQLSLCLIDLQIQVRRAIRRGISSKRILSPRSMMISRPLTQMFNQFFGSHELIQFLDQTNPLAEMAHKRKLSLLGPGGLTRRTASFRTRDIHPSHYGRICTIETSEGMNAGVIPSLSICARVDSEGVIENPLHKIGGNIKEQYTVYVRAGRDERLKIGTNNCLAIGQKGQERSTSTQYQQEFVSMSWDQINLRSILPIQYFAIGASLIPFLEHNDATRTLMGSSMQRQAVPLVKPEKSIVGTGIEAHISLDSGTVLISLKDGKIKYVDGKQIVLVDKDNVQQKFNLITYERSNNGTCIHQRPTVKIGFSVRKGQLLADGSATVGGELALGKNVLVAYMPWEGYNFEDAVLISDRLVNEDIYTSIHIQRYEISVQENIEGFDIITREIPHVDKYLLRHLDYRGIIKIGAWVEPGDVLVGKLAPLEAPHLLRSPEGKLLQAIFGVQAITTRESCLKLPAGGTGRVIDVRWIEQQGPSGVSSLHVYILQKRKIQVGDKVAGRHGNKGVVSRILPREDMPYMQDGTPIDMVLSPLGVPSRMNVGQLFECLLGLAGSYLNNHYRIMPFDERFEREASRKLVFSELYKARKFTGYPWLFEPNSPGKSSLFDGRTGEIFEQSITVGKAYMMKLIHMVDEKIHARSSGPYALVTQQPLRGRSNKGGQRVGEMEVWAFEGFGAAYMLQEILTIKSDHVKGRSQVRGAIVAKESIPKPIDPPDCFRLLIRELRCLGIEIKHTIISEKNFFLDQKPI.

Belongs to the RNA polymerase beta chain family. In plastids the minimal PEP RNA polymerase catalytic core is composed of four subunits: alpha, beta, beta', and beta''. When a (nuclear-encoded) sigma factor is associated with the core the holoenzyme is formed, which can initiate transcription.

It localises to the plastid. The protein localises to the chloroplast. It carries out the reaction RNA(n) + a ribonucleoside 5'-triphosphate = RNA(n+1) + diphosphate. Functionally, DNA-dependent RNA polymerase catalyzes the transcription of DNA into RNA using the four ribonucleoside triphosphates as substrates. The sequence is that of DNA-directed RNA polymerase subunit beta from Staurastrum punctulatum (Green alga).